A 432-amino-acid polypeptide reads, in one-letter code: RNA exonuclease 4 (432 aa).

Over residues 42-54 (ARKKAKKKFRKSK) the composition is skewed to basic residues. Residues 42-177 (ARKKAKKKFR…AKKRTYSDIS (136 aa)) form a disordered region. The span at 121–137 (KASDKSKGDKQRTEKAK) shows a compositional bias: basic and acidic residues. Residue serine 123 is modified to Phosphoserine. A Glycyl lysine isopeptide (Lys-Gly) (interchain with G-Cter in SUMO2) cross-link involves residue lysine 127. Positions 230-381 (KRLGQKKRTI…PSLKRLSEKI (152 aa)) constitute an Exonuclease domain.

It belongs to the REXO4 family. Can bind ESR1 and ESR2. This interaction is abrogated by estrogen and augmented by tamoxifen treatment.

The protein resides in the nucleus. It localises to the nucleolus. Functionally, may function as an exonuclease. The chain is RNA exonuclease 4 (Rexo4) from Mus musculus (Mouse).